A 438-amino-acid chain; its full sequence is Serine--tRNA ligase (438 aa).

245–247 contributes to the L-serine binding site; that stretch reads TAE. 276 to 278 is an ATP binding site; it reads RSE. E299 is a binding site for L-serine. An ATP-binding site is contributed by 363-366; that stretch reads EISS. Residue S398 participates in L-serine binding.

Belongs to the class-II aminoacyl-tRNA synthetase family. Type-1 seryl-tRNA synthetase subfamily. In terms of assembly, homodimer. The tRNA molecule binds across the dimer.

The protein resides in the cytoplasm. It catalyses the reaction tRNA(Ser) + L-serine + ATP = L-seryl-tRNA(Ser) + AMP + diphosphate + H(+). The enzyme catalyses tRNA(Sec) + L-serine + ATP = L-seryl-tRNA(Sec) + AMP + diphosphate + H(+). It functions in the pathway aminoacyl-tRNA biosynthesis; selenocysteinyl-tRNA(Sec) biosynthesis; L-seryl-tRNA(Sec) from L-serine and tRNA(Sec): step 1/1. Catalyzes the attachment of serine to tRNA(Ser). Is also able to aminoacylate tRNA(Sec) with serine, to form the misacylated tRNA L-seryl-tRNA(Sec), which will be further converted into selenocysteinyl-tRNA(Sec). This chain is Serine--tRNA ligase, found in Delftia acidovorans (strain DSM 14801 / SPH-1).